The sequence spans 834 residues: Kinesin-like protein KIF18B (834 aa).

The 345-residue stretch at 9–353 (VVRVVVRVRP…LKYADRAKEI (345 aa)) folds into the Kinesin motor domain. 111-118 (GATGAGKT) contacts ATP. The stretch at 368–404 (ISQYATICQQLQAEVAFLREKLQMYEAGAQALQQQCS) forms a coiled coil. 4 disordered regions span residues 400–508 (QQQC…ADHS), 602–642 (LGAP…NLEM), 655–686 (RGSL…RVCP), and 800–834 (KKPN…TESY). A compositionally biased stretch (low complexity) spans 411-432 (SIPQSLSSSSLQPGPSSQSSTL). Position 431 is a phosphothreonine (Thr-431). Over residues 462 to 474 (EQEQCPQDKQCPT) the composition is skewed to polar residues. Ser-484 carries the phosphoserine modification. The segment covering 611 to 620 (TSDKTFQKPT) has biased composition (basic and acidic residues). Residues 619-627 (PTKEKKRKL) carry the Nuclear localization signal motif. Phosphoserine occurs at positions 634 and 657. The residue at position 669 (Thr-669) is a Phosphothreonine. Ser-814 is modified (phosphoserine).

It belongs to the TRAFAC class myosin-kinesin ATPase superfamily. Kinesin family. As to quaternary structure, interacts with MAPRE1; this interaction is required for efficient accumulation at microtubule plus ends. Interacts with KIF2C at microtubule tips; this interaction increases the affinity of both partners for microtubule plus ends and is required for robust microtubule depolymerization. KIF2C phosphorylation by AURKA or AURKB strongly reduces KIF18B-binding.

The protein localises to the nucleus. Its subcellular location is the cytoplasm. The protein resides in the cytoskeleton. In terms of biological role, in complex with KIF2C, constitutes the major microtubule plus-end depolymerizing activity in mitotic cells. Its major role may be to transport KIF2C and/or MAPRE1 along microtubules. In Mus musculus (Mouse), this protein is Kinesin-like protein KIF18B (Kif18b).